Reading from the N-terminus, the 342-residue chain is Isopentenyl-diphosphate delta-isomerase (342 aa).

11-12 (RK) contributes to the substrate binding site. FMN contacts are provided by residues Ser68, 69-71 (SMT), Ser99, and Asn127. 99–101 (SMR) is a substrate binding site. Glu163 is a binding site for Mg(2+). FMN-binding positions include Lys194, Thr224, and 295–296 (AG).

The protein belongs to the IPP isomerase type 2 family. Homooctamer. Dimer of tetramers. The cofactor is FMN. It depends on NADPH as a cofactor. Requires Mg(2+) as cofactor.

The protein resides in the cytoplasm. The catalysed reaction is isopentenyl diphosphate = dimethylallyl diphosphate. Its function is as follows. Involved in the biosynthesis of isoprenoids. Catalyzes the 1,3-allylic rearrangement of the homoallylic substrate isopentenyl (IPP) to its allylic isomer, dimethylallyl diphosphate (DMAPP). The protein is Isopentenyl-diphosphate delta-isomerase of Rickettsia typhi (strain ATCC VR-144 / Wilmington).